Here is a 331-residue protein sequence, read N- to C-terminus: DNA-directed RNA polymerase subunit alpha (331 aa).

The tract at residues 1 to 223 (MDQKRPQLKA…DELTVFGNVE (223 aa)) is alpha N-terminal domain (alpha-NTD). An alpha C-terminal domain (alpha-CTD) region spans residues 260–331 (PYPADLDTPR…LAQFGLALRD (72 aa)).

Belongs to the RNA polymerase alpha chain family. Homodimer. The RNAP catalytic core consists of 2 alpha, 1 beta, 1 beta' and 1 omega subunit. When a sigma factor is associated with the core the holoenzyme is formed, which can initiate transcription.

It carries out the reaction RNA(n) + a ribonucleoside 5'-triphosphate = RNA(n+1) + diphosphate. Its function is as follows. DNA-dependent RNA polymerase catalyzes the transcription of DNA into RNA using the four ribonucleoside triphosphates as substrates. This Deinococcus geothermalis (strain DSM 11300 / CIP 105573 / AG-3a) protein is DNA-directed RNA polymerase subunit alpha.